The sequence spans 1582 residues: Adhesion G protein-coupled receptor B1 (1582 aa).

The signal sequence occupies residues 1-33; it reads MRGQAAAPGPIWILAPLLLLLLLLGRWARAASG. The Extracellular portion of the chain corresponds to 34–948; that stretch reads ADIGPGTEQC…ATMDKVTVPS (915 aa). N-linked (GlcNAc...) asparagine glycosylation occurs at Asn-64. Residues 261 to 315 form the TSP type-1 1 domain; that stretch reads AGGWKLWSLWGECTRDCGGGLQTRTRTCLPTLGVEGGGCEGVLEEGRLCNRKACG. Cystine bridges form between Cys-273–Cys-309, Cys-277–Cys-314, and Cys-288–Cys-299. The tract at residues 313–335 is disordered; the sequence is ACGPTGRSSSRSQSLRSTDARRR. The segment covering 319 to 329 has biased composition (low complexity); sequence RSSSRSQSLRS. TSP type-1 domains are found at residues 354 to 407, 409 to 462, 467 to 520, and 522 to 575; these read DPAA…AVCP, HGAW…ALCP, DGNW…QQCP, and DGKW…QRCP. Cystine bridges form between Cys-366/Cys-400, Cys-370/Cys-406, Cys-381/Cys-390, Cys-421/Cys-456, Cys-425/Cys-461, Cys-436/Cys-446, Cys-479/Cys-514, Cys-483/Cys-519, Cys-494/Cys-504, Cys-534/Cys-569, Cys-538/Cys-574, Cys-549/Cys-559, Cys-581/Cys-616, and Cys-604/Cys-634. Residue Asn-401 is glycosylated (N-linked (GlcNAc...) asparagine). Asn-607 is a glycosylation site (N-linked (GlcNAc...) asparagine). Thr-609 is subject to Phosphothreonine. Residues Asn-692, Asn-844, Asn-877, and Asn-881 are each glycosylated (N-linked (GlcNAc...) asparagine). In terms of domain architecture, GAIN-B spans 760 to 939; that stretch reads RDAYQVTDNL…AILAQLSADA (180 aa). Disulfide bonds link Cys-884/Cys-921 and Cys-909/Cys-923. A GPS region spans residues 884–939; sequence CILWDETDGPSSSAPPQLGPWSWRGCRTVPLDALRTRCLCDRLSTFAILAQLSADA. An N-terminal stalk following vasculostatin-120 cleavage which is not required for signaling activity region spans residues 927–943; sequence STFAILAQLSADATMDK. A helical membrane pass occupies residues 949-969; it reads VTLIVGCGVSSLTLLMLVIIY. Residues 970-980 lie on the Cytoplasmic side of the membrane; the sequence is VSVWRYIRSER. The helical transmembrane segment at 981-1001 threads the bilayer; the sequence is SVILINFCLSIISSNALILIG. Residues 1002 to 1008 lie on the Extracellular side of the membrane; it reads QTQTRNK. Residues 1009–1029 form a helical membrane-spanning segment; the sequence is VVCTLVAAFLHFFFLSSFCWV. Over 1030 to 1052 the chain is Cytoplasmic; it reads LTEAWQSYMAVTGRLRSRLVRKR. Residues 1053 to 1073 traverse the membrane as a helical segment; sequence FLCLGWGLPALVVAISVGFTK. Topologically, residues 1074 to 1093 are extracellular; that stretch reads AKGYSTMNYCWLSLEGGLLY. Residues 1094–1114 traverse the membrane as a helical segment; it reads AFVGPAAAVVLVNMVIGILVF. Residues 1115–1136 lie on the Cytoplasmic side of the membrane; that stretch reads NKLVSKDGITDKKLKERAGASL. The chain crosses the membrane as a helical span at residues 1137 to 1157; the sequence is WSSCVVLPLLALTWMSAVLAV. The Extracellular portion of the chain corresponds to 1158-1166; the sequence is TDRRSALFQ. The helical transmembrane segment at 1167-1187 threads the bilayer; that stretch reads ILFAVFDSLEGFVIVMVHCIL. The Cytoplasmic portion of the chain corresponds to 1188-1582; sequence RREVQDAVKC…QDIIDLQTEV (395 aa). An involved in interaction with MAGI1 region spans residues 1363–1582; sequence YSINIDQMPQ…QDIIDLQTEV (220 aa). The segment at 1382–1549 is disordered; that stretch reads PDASFPTRSP…AWVKKELEPL (168 aa). Pro residues predominate over residues 1389-1435; that stretch reads RSPPAREPPGGAPPEVPPVQPPPPPPPPPPPPQQPIPPPPTLEPAPP. A compositionally biased stretch (low complexity) spans 1441-1455; the sequence is GEPAAHPGPSSGAGA. Ser-1467 is modified (phosphoserine). Basic and acidic residues-rich tracts occupy residues 1468–1484 and 1491–1520; these read LERRKSRYAELDFEKIM and QDMFQDLNRKLQHAAEKEKEVPGADSKPEK. The tract at residues 1579 to 1582 is indispensable for interaction with MAGI1; the sequence is QTEV.

This sequence belongs to the G-protein coupled receptor 2 family. LN-TM7 subfamily. As to quaternary structure, interacts with ELMO1 and DOCK1. When bound to ELMO1 and DOCK1, acts as a module to promote apoptotic cell engulfment. Interacts with MDM2; the interaction results in inhibition of MDM2-mediated ubiquitination and degradation of DLG4/PSD95. Interacts with PARD3 and TIAM1; the interaction is required for correct dendritic localization of PARD3 and TIAM1 and for dendritic spine formation. Interacts with MAGI1, MAGI3 and BAIAP2. Interacts with PHYHIP. Interacts with DLG4 (via PDZ domain). Vasculostatin-120: Interacts with CD36. Vasculostatin-120: Interacts with ARRB2. Interacts with BAIAP3; this interaction is direct. Post-translationally, proteolytically cleaved to produce vasculostatin-40 and vasculostatin-120. Vasculostatin-40 is the major form and is produced through proteolytic cleavage by MMP14 between residues 321 and 329 with cleavage likely to be between Ser-326 and Leu-327. In terms of processing, ubiquitinated. As to expression, in brain, widespread expression in all neuropil-rich zones including spinal cord gray matter, cerebellar molecular layer, cerebral cortex, thalamic nuclei and basal ganglia with no expression in white matter (at protein level). In the cerebellar molecular layer, highly expressed in interneuron processes whereas Purkinje cells and their dendrites show weaker expression (at protein level). In the olfactory bulb, highly expressed in glomeruli (at protein level). In the retina, highly concentrated in the outer and inner plexiform layers (at protein level). Expressed in brain. Enriched in hippocampus and cortex. Also detected in other tissues including bone marrow and spleen.

It localises to the cell membrane. It is found in the cell projection. Its subcellular location is the phagocytic cup. The protein localises to the cell junction. The protein resides in the focal adhesion. It localises to the dendritic spine. It is found in the postsynaptic density. Its subcellular location is the secreted. Phosphatidylserine receptor which enhances the engulfment of apoptotic cells. Also mediates the binding and engulfment of Gram-negative bacteria. Stimulates production of reactive oxygen species by macrophages in response to Gram-negative bacteria, resulting in enhanced microbicidal macrophage activity. In the gastric mucosa, required for recognition and engulfment of apoptotic gastric epithelial cells. Promotes myoblast fusion. Activates the Rho pathway in a G-protein-dependent manner. Inhibits MDM2-mediated ubiquitination and degradation of DLG4/PSD95, promoting DLG4 stability and regulating synaptic plasticity. Required for the formation of dendritic spines by ensuring the correct localization of PARD3 and TIAM1. Potent inhibitor of angiogenesis in brain and may play a significant role as a mediator of the p53/TP53 signal in suppression of glioblastoma. In terms of biological role, inhibits angiogenesis in a CD36-dependent manner. Its function is as follows. Inhibits angiogenesis. The sequence is that of Adhesion G protein-coupled receptor B1 from Mus musculus (Mouse).